A 103-amino-acid chain; its full sequence is Large ribosomal subunit protein uL24 (103 aa).

It belongs to the universal ribosomal protein uL24 family. Part of the 50S ribosomal subunit.

In terms of biological role, one of two assembly initiator proteins, it binds directly to the 5'-end of the 23S rRNA, where it nucleates assembly of the 50S subunit. One of the proteins that surrounds the polypeptide exit tunnel on the outside of the subunit. This is Large ribosomal subunit protein uL24 from Pediococcus pentosaceus (strain ATCC 25745 / CCUG 21536 / LMG 10740 / 183-1w).